The primary structure comprises 172 residues: Alpha-crystallin A chain (172 aa).

Residue Met1 is modified to N-acetylmethionine. Residues 1 to 63 (MDVTIQHPWF…RTVLDSGISE (63 aa)) form a required for complex formation with BFSP1 and BFSP2 region. Residue Gln6 is modified to Deamidated glutamine; partial. Phosphoserine is present on Ser45. Position 50 is a deamidated glutamine; partial (Gln50). The region spanning 52 to 163 (LFRTVLDSGI…HERAIPVARE (112 aa)) is the sHSP domain. An N6-acetyllysine modification is found at Lys70. A Deamidated glutamine; partial modification is found at Gln90. N6-acetyllysine is present on Lys99. His100 contributes to the Zn(2+) binding site. Asn101 is modified (deamidated asparagine; partial). Zn(2+) contacts are provided by Glu102 and His107. At Ser122 the chain carries Phosphoserine. Asn123 carries the post-translational modification Deamidated asparagine; partial. Gln147 carries the deamidated glutamine; partial modification. Residue His154 participates in Zn(2+) binding. The O-linked (GlcNAc) serine glycan is linked to Ser168.

It belongs to the small heat shock protein (HSP20) family. As to quaternary structure, heteromer composed of three CRYAA and one CRYAB subunits. Inter-subunit bridging via zinc ions enhances stability, which is crucial as there is no protein turn over in the lens. Can also form homodimers and homotetramers (dimers of dimers) which serve as the building blocks of homooligomers. Within homooligomers, the zinc-binding motif is created from residues of 3 different molecules. His-100 and Glu-102 from one molecule are ligands of the zinc ion, and His-107 and His-154 residues from additional molecules complete the site with tetrahedral coordination geometry. Part of a complex required for lens intermediate filament formation composed of BFSP1, BFSP2 and CRYAA. Post-translationally, acetylation at Lys-70 may increase chaperone activity. In terms of processing, undergoes age-dependent proteolytical cleavage at the C-terminus.

It is found in the cytoplasm. The protein localises to the nucleus. In terms of biological role, contributes to the transparency and refractive index of the lens. Acts as a chaperone, preventing aggregation of various proteins under a wide range of stress conditions. Required for the correct formation of lens intermediate filaments as part of a complex composed of BFSP1, BFSP2 and CRYAA. The chain is Alpha-crystallin A chain (CRYAA) from Macaca mulatta (Rhesus macaque).